The sequence spans 781 residues: Protein translocase subunit SecA 2 (781 aa).

ATP-binding positions include Gln-85, 103–107 (GEGKT), and Asp-491.

It belongs to the SecA family. Monomer and homodimer. Part of the essential Sec protein translocation apparatus which comprises SecA, SecYEG and auxiliary proteins SecDF. Other proteins may also be involved.

It localises to the cell membrane. Its subcellular location is the cytoplasm. It carries out the reaction ATP + H2O + cellular proteinSide 1 = ADP + phosphate + cellular proteinSide 2.. Part of the Sec protein translocase complex. Interacts with the SecYEG preprotein conducting channel. Has a central role in coupling the hydrolysis of ATP to the transfer of proteins into and across the cell membrane, serving as an ATP-driven molecular motor driving the stepwise translocation of polypeptide chains across the membrane. This chain is Protein translocase subunit SecA 2, found in Clostridioides difficile (strain 630) (Peptoclostridium difficile).